The following is a 1407-amino-acid chain: YEATS domain-containing protein 2 (1407 aa).

Residue Lys-9 forms a Glycyl lysine isopeptide (Lys-Gly) (interchain with G-Cter in SUMO2) linkage. Residues 54 to 80 (MKNKEHEIDVIDQRLIEARRMMDKLRA) are a coiled coil. A Glycyl lysine isopeptide (Lys-Gly) (interchain with G-Cter in SUMO2) cross-link involves residue Lys-113. The tract at residues 116–196 (LESPSRSSSP…SHKRELRNAD (81 aa)) is disordered. 3 positions are modified to phosphoserine: Ser-118, Ser-120, and Ser-157. A compositionally biased stretch (polar residues) spans 119 to 148 (PSRSSSPTNQRSETPSANHSESDSLSQHND). A compositionally biased stretch (basic and acidic residues) spans 149–165 (FLSDKDNNSNVDVEERP). Lys-189 is covalently cross-linked (Glycyl lysine isopeptide (Lys-Gly) (interchain with G-Cter in SUMO2)). The YEATS domain occupies 201 to 346 (ETSRLFVKKT…EDSVYPQSSE (146 aa)). Histone H3K27cr binding stretches follow at residues 260–262 (HPS) and 283–285 (WGE). A Phosphothreonine modification is found at Thr-406. Phosphoserine is present on residues Ser-446, Ser-462, Ser-464, Ser-470, and Ser-472. The segment at 462–540 (SGSPISTPSP…GTGSPIPKIH (79 aa)) is disordered. Thr-477 carries the phosphothreonine modification. Lys-486 is covalently cross-linked (Glycyl lysine isopeptide (Lys-Gly) (interchain with G-Cter in SUMO2)). Positions 511–520 (STPSTGSPTS) are enriched in low complexity. A Phosphoserine modification is found at Ser-534. A Glycyl lysine isopeptide (Lys-Gly) (interchain with G-Cter in SUMO2) cross-link involves residue Lys-550. Ser-573 is modified (phosphoserine). Residue Lys-590 forms a Glycyl lysine isopeptide (Lys-Gly) (interchain with G-Cter in SUMO2) linkage. Position 625 is a phosphoserine (Ser-625). Residues Lys-647 and Lys-771 each participate in a glycyl lysine isopeptide (Lys-Gly) (interchain with G-Cter in SUMO2) cross-link. The tract at residues 791–833 (SGSAAAGGSGSSGAGGGSGGGGGSGAGGTPSTSGPGGGPQHLT) is disordered. A compositionally biased stretch (gly residues) spans 795-829 (AAGGSGSSGAGGGSGGGGGSGAGGTPSTSGPGGGP). A Glycyl lysine isopeptide (Lys-Gly) (interchain with G-Cter in SUMO2) cross-link involves residue Lys-908. Residue Lys-1095 forms a Glycyl lysine isopeptide (Lys-Gly) (interchain with G-Cter in SUMO1); alternate linkage. Lys-1095 is covalently cross-linked (Glycyl lysine isopeptide (Lys-Gly) (interchain with G-Cter in SUMO2); alternate). Lys-1115 is covalently cross-linked (Glycyl lysine isopeptide (Lys-Gly) (interchain with G-Cter in SUMO2)). Thr-1204 carries the phosphothreonine modification. Residues Lys-1207 and Lys-1270 each participate in a glycyl lysine isopeptide (Lys-Gly) (interchain with G-Cter in SUMO2) cross-link.

As to quaternary structure, component of the ADA2A-containing complex (ATAC), composed of KAT14, KAT2A, TADA2L, TADA3L, ZZ3, MBIP, WDR5, YEATS2, SGF29 and DR1.

It localises to the nucleus. Chromatin reader component of the ATAC complex, a complex with histone acetyltransferase activity on histones H3 and H4. YEATS2 specifically recognizes and binds histone H3 crotonylated at 'Lys-27' (H3K27cr). Crotonylation marks active promoters and enhancers and confers resistance to transcriptional repressors. The protein is YEATS domain-containing protein 2 of Mus musculus (Mouse).